The sequence spans 1217 residues: Inactive disease resistance protein RPS4 (1217 aa).

A TIR domain is found at 14 to 175 (PQHQVFINFR…EIVKAVKTAL (162 aa)). Residue Glu-88 is part of the active site. In terms of domain architecture, NB-ARC spans 211–472 (EQRLKDLEEK…FRSQDKDYVE (262 aa)). LRR repeat units follow at residues 260–285 (HALIDQIRVKSKHLELDRLPQMLLGE), 436–459 (PNIVSVFQVSYDELTTAQKDAFLD), 614–636 (LKEVRCLHWLKFPLETLPNDFNP), 637–659 (INLVDLKLPYSEMEQLWEGDKDT), 682–706 (AEKLQRLNLEGCTTLKAFPHDMKKM), 708–728 (MLAFLNLKGCTSLESLPEMNL), 729–749 (ISLKTLTLSGCSTFKEFPLIS), 750–774 (DNIETLYLDGTAISQLPMNMEKLQR), 796–818 (LKALQELILSDCLNLKIFPEIDI), 819–842 (SFLNILLLDGTAIEVMPQLPSVQY), and 861–887 (LSQLKWLDLKYCTSLTSVPEFPPNLQC). A disordered region spans residues 1162–1195 (TEGVDGRVKKKKKTRMDNGRPKKKQRSGRDDNQT). The short motif at 1170-1177 (KKKKKTRM) is the Nuclear localization signal element.

In terms of assembly, interacts with EDS1.

The protein resides in the nucleus. It catalyses the reaction NAD(+) + H2O = ADP-D-ribose + nicotinamide + H(+). This Arabidopsis thaliana (Mouse-ear cress) protein is Inactive disease resistance protein RPS4 (RPS4).